The following is a 244-amino-acid chain: tRNA pseudouridine synthase A (244 aa).

The active-site Nucleophile is the D52. Y110 contributes to the substrate binding site.

Belongs to the tRNA pseudouridine synthase TruA family. In terms of assembly, homodimer.

The enzyme catalyses uridine(38/39/40) in tRNA = pseudouridine(38/39/40) in tRNA. In terms of biological role, formation of pseudouridine at positions 38, 39 and 40 in the anticodon stem and loop of transfer RNAs. The sequence is that of tRNA pseudouridine synthase A from Geobacter sulfurreducens (strain ATCC 51573 / DSM 12127 / PCA).